Reading from the N-terminus, the 319-residue chain is Methionyl-tRNA formyltransferase (319 aa).

Serine 113–proline 116 serves as a coordination point for (6S)-5,6,7,8-tetrahydrofolate.

The protein belongs to the Fmt family.

It catalyses the reaction L-methionyl-tRNA(fMet) + (6R)-10-formyltetrahydrofolate = N-formyl-L-methionyl-tRNA(fMet) + (6S)-5,6,7,8-tetrahydrofolate + H(+). Its function is as follows. Attaches a formyl group to the free amino group of methionyl-tRNA(fMet). The formyl group appears to play a dual role in the initiator identity of N-formylmethionyl-tRNA by promoting its recognition by IF2 and preventing the misappropriation of this tRNA by the elongation apparatus. The sequence is that of Methionyl-tRNA formyltransferase from Pseudomonas fluorescens (strain ATCC BAA-477 / NRRL B-23932 / Pf-5).